Reading from the N-terminus, the 1342-residue chain is DNA-directed RNA polymerase subunit beta (1342 aa).

This sequence belongs to the RNA polymerase beta chain family. As to quaternary structure, the RNAP catalytic core consists of 2 alpha, 1 beta, 1 beta' and 1 omega subunit. When a sigma factor is associated with the core the holoenzyme is formed, which can initiate transcription.

The catalysed reaction is RNA(n) + a ribonucleoside 5'-triphosphate = RNA(n+1) + diphosphate. Functionally, DNA-dependent RNA polymerase catalyzes the transcription of DNA into RNA using the four ribonucleoside triphosphates as substrates. The chain is DNA-directed RNA polymerase subunit beta from Pseudoalteromonas atlantica (strain T6c / ATCC BAA-1087).